The chain runs to 280 residues: 3-hydroxyanthranilate 3,4-dioxygenase (280 aa).

The segment at 1-160 is domain A (catalytic); sequence MAIPVNVKKW…SEQYKSGKPD (160 aa). Arg43 provides a ligand contact to O2. Fe cation contacts are provided by His47, Glu53, and His91. Glu53 is a binding site for substrate. Residues Arg95 and Glu105 each contribute to the substrate site. A linker region spans residues 161–177; it reads PAQPIGKMPFFLNTEQV. The segment at 178 to 280 is domain B; sequence MEPFSFQNWL…IALSTSQVPA (103 aa).

This sequence belongs to the 3-HAO family. Monomer. It depends on Fe(2+) as a cofactor.

It localises to the cytoplasm. The protein localises to the cytosol. It carries out the reaction 3-hydroxyanthranilate + O2 = (2Z,4Z)-2-amino-3-carboxymuconate 6-semialdehyde. The protein operates within cofactor biosynthesis; NAD(+) biosynthesis; quinolinate from L-kynurenine: step 3/3. In terms of biological role, catalyzes the oxidative ring opening of 3-hydroxyanthranilate to 2-amino-3-carboxymuconate semialdehyde, which spontaneously cyclizes to quinolinate. The protein is 3-hydroxyanthranilate 3,4-dioxygenase (haao) of Xenopus tropicalis (Western clawed frog).